A 371-amino-acid polypeptide reads, in one-letter code: MDLIEVTEGRTTFRIPVQDPNSPFPPSSAPVFFNPKMAMNRDATVLLLSVLNPEEYLDTMGASGVRGLRVAGECRIPVVINDRDPAAADLIRANLAGAGLEGRVTVEDANVLLSRERFDAVDLDPFGSPAPFTDAACRSAKRYLFVTATDTAPLCGAHLKAGIRRYATKPLNTEYHAEVGLRILLGYVARTMVKYDRGLSPLFCFASAHFLRLHLQAEKGADAADRTVARLGFLYHCPSCPERTEEPGVLPHDHVCPRCGTTMLPIGPLWLGSLSDMALLDQMKERLPDLSLSTERRLGKLLDVLKVELPTSSHYDYHRIAKWIGGSPPAIDVVIARLIQTGYRASRAHYSGTALKTDAPLDAIAAALSAQ.

Residues 4–368 form the Trm1 methyltransferase domain; the sequence is IEVTEGRTTF…APLDAIAAAL (365 aa). Residues arginine 41, arginine 66, aspartate 82, aspartate 108, and alanine 109 each coordinate S-adenosyl-L-methionine. Zn(2+)-binding residues include cysteine 237, cysteine 240, cysteine 256, and cysteine 259.

It belongs to the class I-like SAM-binding methyltransferase superfamily. Trm1 family.

The enzyme catalyses guanosine(26) in tRNA + 2 S-adenosyl-L-methionine = N(2)-dimethylguanosine(26) in tRNA + 2 S-adenosyl-L-homocysteine + 2 H(+). Functionally, dimethylates a single guanine residue at position 26 of a number of tRNAs using S-adenosyl-L-methionine as donor of the methyl groups. The sequence is that of tRNA (guanine(26)-N(2))-dimethyltransferase from Methanosphaerula palustris (strain ATCC BAA-1556 / DSM 19958 / E1-9c).